Consider the following 59-residue polypeptide: Large ribosomal subunit protein bL32 (59 aa).

The interval 1 to 25 (MAVQQNKKSPSKRGMHRAHDFLTAP) is disordered.

The protein belongs to the bacterial ribosomal protein bL32 family.

This chain is Large ribosomal subunit protein bL32, found in Azoarcus sp. (strain BH72).